An 870-amino-acid polypeptide reads, in one-letter code: DNA mismatch repair protein MutS (870 aa).

616 to 623 (GPNMAGKS) contributes to the ATP binding site.

The protein belongs to the DNA mismatch repair MutS family.

Its function is as follows. This protein is involved in the repair of mismatches in DNA. It is possible that it carries out the mismatch recognition step. This protein has a weak ATPase activity. This chain is DNA mismatch repair protein MutS, found in Parabacteroides distasonis (strain ATCC 8503 / DSM 20701 / CIP 104284 / JCM 5825 / NCTC 11152).